A 42-amino-acid chain; its full sequence is Photosystem II reaction center protein J (42 aa).

The helical transmembrane segment at 12-32 (LWFVGMIVGLAALGLLGIFFY) threads the bilayer.

Belongs to the PsbJ family. PSII is composed of 1 copy each of membrane proteins PsbA, PsbB, PsbC, PsbD, PsbE, PsbF, PsbH, PsbI, PsbJ, PsbK, PsbL, PsbM, PsbT, PsbX, PsbY, PsbZ, Psb30/Ycf12, at least 3 peripheral proteins of the oxygen-evolving complex and a large number of cofactors. It forms dimeric complexes.

Its subcellular location is the plastid. The protein resides in the chloroplast thylakoid membrane. Functionally, one of the components of the core complex of photosystem II (PSII). PSII is a light-driven water:plastoquinone oxidoreductase that uses light energy to abstract electrons from H(2)O, generating O(2) and a proton gradient subsequently used for ATP formation. It consists of a core antenna complex that captures photons, and an electron transfer chain that converts photonic excitation into a charge separation. This is Photosystem II reaction center protein J from Nephroselmis olivacea (Green alga).